The primary structure comprises 290 residues: Enoyl-CoA hydratase, mitochondrial (290 aa).

A mitochondrion-targeting transit peptide spans 1–29 (MAALRALLPRACNSLLSPVRCPEFRRFAS). 98–101 (ADIK) provides a ligand contact to substrate. An N6-acetyllysine; alternate mark is found at K101 and K115. N6-succinyllysine; alternate occurs at positions 101 and 115. Position 141 (G141) interacts with substrate. Position 204 is an N6-succinyllysine (K204). The residue at position 211 (K211) is an N6-acetyllysine.

This sequence belongs to the enoyl-CoA hydratase/isomerase family. In terms of assembly, homohexamer; dimer of trimers. Detected in liver (at protein level).

It localises to the mitochondrion matrix. The enzyme catalyses a (3S)-3-hydroxyacyl-CoA = a (2E)-enoyl-CoA + H2O. It carries out the reaction a (3E)-enoyl-CoA = a 4-saturated (2E)-enoyl-CoA. It catalyses the reaction (3E)-hexenoyl-CoA = (2E)-hexenoyl-CoA. The catalysed reaction is (3S)-3-hydroxybutanoyl-CoA = (2E)-butenoyl-CoA + H2O. The enzyme catalyses 3-hydroxyisovaleryl-CoA = 3-methylbut-2-enoyl-CoA + H2O. It carries out the reaction 3-hydroxypropanoyl-CoA = acryloyl-CoA + H2O. It catalyses the reaction 3-hydroxybutanoyl-CoA = (2E)-butenoyl-CoA + H2O. The catalysed reaction is 2-methylpropenoyl-CoA + H2O = (S)-3-hydroxyisobutanoyl-CoA. The enzyme catalyses (3S)-hydroxyhexanoyl-CoA = (2E)-hexenoyl-CoA + H2O. It carries out the reaction (3S)-hydroxydecanoyl-CoA = (2E)-decenoyl-CoA + H2O. Its pathway is lipid metabolism; fatty acid beta-oxidation. Its function is as follows. Converts unsaturated trans-2-enoyl-CoA species ((2E)-enoyl-CoA) to the corresponding 3(S)-3-hydroxyacyl-CoA species through addition of a water molecule to the double bond. Catalyzes the hydration of medium- and short-chained fatty enoyl-CoA thioesters from 4 carbons long (C4) up to C16. Has high substrate specificity for crotonyl-CoA ((2E)-butenoyl-CoA) and moderate specificity for acryloyl-CoA, 3-methylcrotonyl-CoA (3-methyl-(2E)-butenoyl-CoA) and methacrylyl-CoA ((2E)-2-methylpropenoyl-CoA). Can bind tiglyl-CoA (2-methylcrotonoyl-CoA), but hydrates only a small amount of this substrate. Plays a key role in the beta-oxidation spiral of short- and medium-chain fatty acid oxidation. At a lower rate than the hydratase reaction, catalyzes the isomerase reaction of trans-3-enoyl-CoA species (such as (3E)-hexenoyl-CoA) to trans-2-enoyl-CoA species (such as (2E)-hexenoyl-CoA), which are subsequently hydrated to 3(S)-3-hydroxyacyl-CoA species (such as (3S)-hydroxyhexanoyl-CoA). The protein is Enoyl-CoA hydratase, mitochondrial of Rattus norvegicus (Rat).